The primary structure comprises 132 residues: L-ectoine synthase (132 aa).

The protein belongs to the ectoine synthase family.

It catalyses the reaction (2S)-4-acetamido-2-aminobutanoate = L-ectoine + H2O. Its pathway is amine and polyamine biosynthesis; ectoine biosynthesis; L-ectoine from L-aspartate 4-semialdehyde: step 3/3. Catalyzes the circularization of gamma-N-acetyl-alpha,gamma-diaminobutyric acid (ADABA) to ectoine (1,4,5,6-tetrahydro-2-methyl-4-pyrimidine carboxylic acid), which is an excellent osmoprotectant. The polypeptide is L-ectoine synthase (Rhodococcus erythropolis (strain PR4 / NBRC 100887)).